A 504-amino-acid chain; its full sequence is Subtilisin-like protease 1 (504 aa).

The N-terminal stretch at 1 to 19 is a signal peptide; it reads MGVFRFISISLAAVSAANA. Positions 20 to 116 are excised as a propeptide; the sequence is AQILSMPHAQ…VEPDTIVSVH (97 aa). The 83-residue stretch at 34–116 folds into the Inhibitor I9 domain; that stretch reads SYIVMMKDDT…VEPDTIVSVH (83 aa). One can recognise a Peptidase S8 domain in the interval 126–400; the sequence is SWGLARISNP…NVLINNGGAK (275 aa). Active-site charge relay system residues include D158 and H190. Positions 172-198 are disordered; it reads AIWGSNQVNDGDDRDGSGHGTHTSGTM. Residues N233 and N251 are each glycosylated (N-linked (GlcNAc...) asparagine). Polar residues predominate over residues 282–294; sequence NDNQDAQSSSPAS. Residues 282–312 form a disordered region; the sequence is NDNQDAQSSSPASEPSVCTVGSSAEDDSRSS. S345 serves as the catalytic Charge relay system. Over residues 378–394 the composition is skewed to polar residues; that stretch reads TSSITDAGPGTPTNVLI. The tract at residues 378–483 is disordered; the sequence is TSSITDAGPG…YPGGDNFDFD (106 aa). Pro residues-rich tracts occupy residues 405–449 and 457–473; these read NPNP…PGQP and APAPAPMPPTPQHPHTP.

Belongs to the peptidase S8 family.

Its subcellular location is the secreted. Secreted subtilisin-like serine protease with keratinolytic activity that contributes to pathogenicity. This is Subtilisin-like protease 1 (SUB1) from Trichophyton rubrum (Athlete's foot fungus).